Consider the following 327-residue polypeptide: G protein pathway suppressor 2 (327 aa).

Residues 14–109 (MARALHRHIM…RRRKEQSDLT (96 aa)) are a coiled coil. Positions 26–65 (RERKRQEEEEVDKMMEQKMKEEQERRKKKEMEERMSLEET) are disordered. Residues Lys45 and Lys71 each participate in a glycyl lysine isopeptide (Lys-Gly) (interchain with G-Cter in SUMO1) cross-link. The interaction with SUMO stretch occupies residues 61-94 (SLEETKEQILKLEEKLLALQEEKHQLFLQLKKVL). Disordered stretches follow at residues 177-208 (HGQF…SPSQ) and 253-327 (QKQM…FYHK). Over residues 253-271 (QKQMEHANQQTGFSDSSSL) the composition is skewed to polar residues. Residue Arg312 is modified to Asymmetric dimethylarginine. The segment covering 317-327 (QHSQNPRFYHK) has biased composition (polar residues). The residue at position 323 (Arg323) is an Asymmetric dimethylarginine; alternate. At Arg323 the chain carries Omega-N-methylarginine; alternate.

As to quaternary structure, component of the N-Cor repressor complex, at least composed of NCOR1, NCOR2, HDAC3, TBL1X, TBL1R, CORO2A and GPS2. Interacts (when sumoylated at Lys-71) with TBL1X; leading to protect GPS2 from degradation by the proteasome. Interacts with UBE2N; leading to inhibit UBE2N/Ubc13 activity. Interacts with TRAF1. Interacts with TRAF2. Interacts with TRAF6. Interacts with PPARG (when in the liganded conformation). Interacts with (sumoylated) NR1H2; interaction with sumoylated NR1H2 and NR5A2 onto hepatic acute phase protein promoters prevents N-Cor corepressor complex dissociation. Interacts with (sumoylated) NR5A2; interaction with sumoylated NR1H2 and NR5A2 onto hepatic acute phase protein promoters prevents N-Cor corepressor complex dissociation. Interacts with NR1H3. Interacts with RFX4. Interacts with ANKRD26. In terms of assembly, (Microbial infection) Interacts (via coiled coil domain) with hepatitis C virus (HCV) NS5A. Sumoylation regulates its subcellular location. Sumoylation at Lys-45 and Lys-71 regulates the shuttling between the cytoplasm and the nucleus. Sumoylation at Lys-71 is required for interaction with TBL1X. Sumoylated at Lys-45 and Lys-71 in mitochondrion. Desumoylation by SENP1 leads to relocation from the mitochondria to the nucleus. In terms of processing, ubiquitinated at the C-terminus by SIAH2; leading to its degradation by the proteasome. Interaction with TBL1X and methylation at Arg-323 protect GPS2 against ubiquitination and degradation. Post-translationally, methylated at Arg-312 and Arg-323 by PRMT6. Methylation at Arg-323 protects from degradation by the proteasome. As to expression, widely expressed.

It is found in the nucleus. It localises to the mitochondrion. The protein resides in the cytoplasm. The protein localises to the cytosol. Key regulator of inflammation, lipid metabolism and mitochondrion homeostasis that acts by inhibiting the activity of the ubiquitin-conjugating enzyme UBE2N/Ubc13, thereby inhibiting 'Lys-63'-linked ubiquitination. In the nucleus, can both acts as a corepressor and coactivator of transcription, depending on the context. Acts as a transcription coactivator in adipocytes by promoting the recruitment of PPARG to promoters: acts by inhibiting the activity of the ubiquitin-conjugating enzyme UBE2N/Ubc13, leading to stabilization of KDM4A and subsequent histone H3 'Lys-9' (H3K9) demethylation. Promotes cholesterol efflux by acting as a transcription coactivator. Acts as a regulator of B-cell development by inhibiting UBE2N/Ubc13, thereby restricting the activation of Toll-like receptors (TLRs) and B-cell antigen receptors (BCRs) signaling pathways. Acts as a key mediator of mitochondrial stress response: in response to mitochondrial depolarization, relocates from the mitochondria to the nucleus following desumoylation and specifically promotes expression of nuclear-encoded mitochondrial genes. Promotes transcription of nuclear-encoded mitochondrial genes by inhibiting UBE2N/Ubc13. Can also act as a corepressor as part of the N-Cor repressor complex by repressing active PPARG. Plays an anti-inflammatory role in macrophages and is required for insulin sensitivity by acting as a corepressor. Plays an anti-inflammatory role during the hepatic acute phase response by interacting with sumoylated NR1H2 and NR5A2 proteins, thereby preventing N-Cor corepressor complex dissociation. In the cytosol, also plays a non-transcriptional role by regulating insulin signaling and pro-inflammatory pathways. In the cytoplasm, acts as a negative regulator of inflammation by inhibiting the pro-inflammatory TNF-alpha pathway; acts by repressing UBE2N/Ubc13 activity. In the cytoplasm of adipocytes, restricts the activation of insulin signaling via inhibition of UBE2N/Ubc13-mediated ubiquitination of AKT. Able to suppress G-protein- and mitogen-activated protein kinase-mediated signal transduction. Acts as a tumor-suppressor in liposarcoma. Its function is as follows. (Microbial infection) Required for efficient replication of hepatitis C virus (HCV) by promoting the interaction between VAPA and HCV virus protein NS5A. This Homo sapiens (Human) protein is G protein pathway suppressor 2.